The chain runs to 431 residues: Levansucrase LscB (431 aa).

5 residues coordinate sucrose: Trp-61, Asp-62, Ala-148, Arg-218, and Asp-219. Asp-62 acts as the Nucleophile in catalysis. The Proton donor/acceptor role is filled by Glu-303.

The protein belongs to the glycosyl hydrolase 68 family.

It is found in the secreted. It carries out the reaction [6)-beta-D-fructofuranosyl-(2-&gt;](n) alpha-D-glucopyranoside + sucrose = [6)-beta-D-fructofuranosyl-(2-&gt;](n+1) alpha-D-glucopyranoside + D-glucose. Functionally, catalyzes the synthesis of levan, a fructose polymer, by transferring the fructosyl moiety from sucrose to a growing acceptor molecule. The polypeptide is Levansucrase LscB (Pseudomonas savastanoi pv. glycinea (Pseudomonas syringae pv. glycinea)).